The following is a 538-amino-acid chain: CTP synthase (538 aa).

The interval 1-270 is amidoligase domain; that stretch reads MSRTKFIFVT…DEVVLKTMGM (270 aa). Ser15 contributes to the CTP binding site. Ser15 contacts UTP. ATP is bound at residue 16–21; it reads SLGKGV. Tyr56 lines the L-glutamine pocket. Asp73 is a binding site for ATP. Residues Asp73 and Glu143 each coordinate Mg(2+). Residues 150–152, 190–195, and Lys226 each bind CTP; these read DIE and KTKPTQ. Residues 190–195 and Lys226 contribute to the UTP site; that span reads KTKPTQ. The region spanning 295–537 is the Glutamine amidotransferase type-1 domain; that stretch reads QIAVVGKYIS…IRASVKYSKK (243 aa). L-glutamine is bound at residue Gly357. Cys384 functions as the Nucleophile; for glutamine hydrolysis in the catalytic mechanism. Residues 385–388, Glu408, and Arg465 contribute to the L-glutamine site; that span reads LGMQ. Residues His510 and Glu512 contribute to the active site.

It belongs to the CTP synthase family. Homotetramer.

The catalysed reaction is UTP + L-glutamine + ATP + H2O = CTP + L-glutamate + ADP + phosphate + 2 H(+). It catalyses the reaction L-glutamine + H2O = L-glutamate + NH4(+). It carries out the reaction UTP + NH4(+) + ATP = CTP + ADP + phosphate + 2 H(+). It participates in pyrimidine metabolism; CTP biosynthesis via de novo pathway; CTP from UDP: step 2/2. Allosterically activated by GTP, when glutamine is the substrate; GTP has no effect on the reaction when ammonia is the substrate. The allosteric effector GTP functions by stabilizing the protein conformation that binds the tetrahedral intermediate(s) formed during glutamine hydrolysis. Inhibited by the product CTP, via allosteric rather than competitive inhibition. Functionally, catalyzes the ATP-dependent amination of UTP to CTP with either L-glutamine or ammonia as the source of nitrogen. Regulates intracellular CTP levels through interactions with the four ribonucleotide triphosphates. In Leptospira interrogans serogroup Icterohaemorrhagiae serovar copenhageni (strain Fiocruz L1-130), this protein is CTP synthase.